The sequence spans 535 residues: uncharacterized protein (535 aa).

The next 6 membrane-spanning stretches (helical) occupy residues 55-75 (LITI…IPII), 82-102 (FMPV…IMFV), 115-135 (IICF…ILRH), 143-163 (AFVL…LMLF), 201-221 (STIL…TLIM), and 346-366 (VSGP…NVFA).

Its subcellular location is the membrane. This is an uncharacterized protein from Schizosaccharomyces pombe (strain 972 / ATCC 24843) (Fission yeast).